Reading from the N-terminus, the 569-residue chain is Phosphatase and actin regulator 2 (569 aa).

Residues 1-13 (MGQTSVSALSPQP) are compositionally biased toward polar residues. The interval 1 to 47 (MGQTSVSALSPQPGSVDGLDKASIANSDGPPAGSQTPPFKRKGKLST) is disordered. S27 carries the post-translational modification Phosphoserine. Position 36 is a phosphothreonine (T36). Residues 71–96 (AVLERKISTRQSREELIRRGLLKELP) form an RPEL 1 repeat. Disordered stretches follow at residues 98–253 (QDGD…TGKP) and 295–483 (PTLP…QEAK). Basic and acidic residues predominate over residues 140 to 151 (GPPREEQAEEKT). Residues 162-176 (GSKASSSPSASSTSS) show a composition bias toward low complexity. A compositionally biased stretch (polar residues) spans 212–224 (LSPNTVTSETSSL). The residue at position 357 (S357) is a Phosphoserine. The segment covering 386–399 (TDDDDEEDDDDDST) has biased composition (acidic residues). RPEL repeat units lie at residues 412–437 (DTLAIKLGNRPSKKELEDKNILQRTS), 450–475 (TKLVRRLSQRPTTEELEQRSILKQKN), and 488–513 (RRLSRKLSLRPTVPELQARRILRFNE). Over residues 423–444 (SKKELEDKNILQRTSEEERQEL) the composition is skewed to basic and acidic residues. S457 is subject to Phosphoserine. The span at 461–483 (TTEELEQRSILKQKNEEEEQEAK) shows a compositional bias: basic and acidic residues. S495 is modified (phosphoserine).

This sequence belongs to the phosphatase and actin regulator family. As to quaternary structure, binds PPP1CA and actin. Expressed in the brain with high levels in the cerebellum, specifically in the Purkinje cell layer, choroid plexus and thalamus (ventral, rhomboid and anterior nuclei). Moderate to high expression in the hippocampus, piriform cortex, olfactory bulb, entorhinal cortex, as well as in geniculate bodies, lamboid septal zone, preoptic area and ventral pallidum (at protein level).

In Rattus norvegicus (Rat), this protein is Phosphatase and actin regulator 2 (Phactr2).